The sequence spans 72 residues: Large ribosomal subunit protein bL28 (72 aa).

This sequence belongs to the bacterial ribosomal protein bL28 family.

The sequence is that of Large ribosomal subunit protein bL28 from Chlorobium limicola (strain DSM 245 / NBRC 103803 / 6330).